The following is an 89-amino-acid chain: Teretoxin Tan6.8 (89 aa).

Residues Met-1 to Glu-21 form the signal peptide. Positions Glu-22 to His-42 are disordered. Positions Glu-22 to Arg-44 are excised as a propeptide.

Contains 3 disulfide bonds. As to expression, expressed by the venom duct.

It localises to the secreted. The protein is Teretoxin Tan6.8 of Terebra anilis (Auger snail).